A 396-amino-acid polypeptide reads, in one-letter code: Elongation factor Tu (396 aa).

A tr-type G domain is found at 10-205; sequence KPHVNIGTIG…AVDSYIPTPE (196 aa). The G1 stretch occupies residues 19–26; the sequence is GHVDHGKT. 19-26 lines the GTP pocket; it reads GHVDHGKT. Residue threonine 26 coordinates Mg(2+). Residues 60-64 form a G2 region; it reads GITIN. The segment at 81–84 is G3; it reads DCPG. GTP-binding positions include 81-85 and 136-139; these read DCPGH and NKCD. Residues 136-139 form a G4 region; that stretch reads NKCD. Positions 174–176 are G5; sequence SAK.

The protein belongs to the TRAFAC class translation factor GTPase superfamily. Classic translation factor GTPase family. EF-Tu/EF-1A subfamily. In terms of assembly, monomer.

It is found in the cytoplasm. The catalysed reaction is GTP + H2O = GDP + phosphate + H(+). Its function is as follows. GTP hydrolase that promotes the GTP-dependent binding of aminoacyl-tRNA to the A-site of ribosomes during protein biosynthesis. In Brevibacillus brevis (strain 47 / JCM 6285 / NBRC 100599), this protein is Elongation factor Tu.